A 79-amino-acid polypeptide reads, in one-letter code: ATP synthase subunit c (79 aa).

2 helical membrane-spanning segments follow: residues 11–31 and 53–73; these read IAAA…IGIL and FFIV…LSLY.

Belongs to the ATPase C chain family. F-type ATPases have 2 components, F(1) - the catalytic core - and F(0) - the membrane proton channel. F(1) has five subunits: alpha(3), beta(3), gamma(1), delta(1), epsilon(1). F(0) has three main subunits: a(1), b(2) and c(10-14). The alpha and beta chains form an alternating ring which encloses part of the gamma chain. F(1) is attached to F(0) by a central stalk formed by the gamma and epsilon chains, while a peripheral stalk is formed by the delta and b chains.

It localises to the cell inner membrane. Functionally, f(1)F(0) ATP synthase produces ATP from ADP in the presence of a proton or sodium gradient. F-type ATPases consist of two structural domains, F(1) containing the extramembraneous catalytic core and F(0) containing the membrane proton channel, linked together by a central stalk and a peripheral stalk. During catalysis, ATP synthesis in the catalytic domain of F(1) is coupled via a rotary mechanism of the central stalk subunits to proton translocation. Its function is as follows. Key component of the F(0) channel; it plays a direct role in translocation across the membrane. A homomeric c-ring of between 10-14 subunits forms the central stalk rotor element with the F(1) delta and epsilon subunits. The chain is ATP synthase subunit c from Blochmanniella floridana.